An 85-amino-acid polypeptide reads, in one-letter code: Small ribosomal subunit protein bS16c (85 aa).

The protein belongs to the bacterial ribosomal protein bS16 family.

The protein resides in the plastid. It is found in the chloroplast. This Agrostis stolonifera (Creeping bentgrass) protein is Small ribosomal subunit protein bS16c.